The chain runs to 549 residues: MTSVTDHSAHSMERAAEHTINIHTTAGKLAELHKRTEEALHPVGAAAFEKVHAKGKFTARERIYALLDDDSFVELDALARHRSTNFGLGENRPVGDGVVTGYGTIDGRDVCIFSQDVTVFGGSLGEVYGEKIVKVQELAIKTGRPLIGINDGAGARIQEGVVSLGLYSRIFRNNILASGVIPQISLIMGAAAGGHVYSPALTDFVVMVDQTSQMFITGPDVIKTVTGEDVTMEELGGAHTHMAKSGTAHYVASGEQDAFDWVRDVLSYLPSNNFTDAPRYSKPVPHGSIEDNLTAKDLELDTLIPDSPNQPYDMHEVVTRLLDEEEFLEVQAGYATNIVVGLGRIDDRPVGIVANQPIQFAGCLDINASEKAARFVRVCDCFNIPIVMLVDVPGFLPGTEQEYDGIIRRGAKLLFAYGEATVPKITVITRKAYGGAYCVMGSKNMGCDVNLAWPTAQIAVMGASGAVGFVYRKELAQAAKNGANVDELRLQLQQEYEDTLVNPYIAAERGYVDAVIPPSHTRGYIATALHLLERKIAHLPPKKHGNIPL.

A CoA carboxyltransferase N-terminal domain is found at 25–281 (TAGKLAELHK…NNFTDAPRYS (257 aa)). The region spanning 295–542 (AKDLELDTLI…ERKIAHLPPK (248 aa)) is the CoA carboxyltransferase C-terminal domain.

The protein belongs to the AccD/PCCB family. In terms of assembly, the biotin-dependent acyl-CoA carboxylase complex is composed of AccA3, which contains the biotin carboxylase (BC) and biotin carboxyl carrier protein (BCCP) domains, and AccD5, which contains the carboxyl transferase (CT) domain.

The enzyme catalyses N(6)-carboxybiotinyl-L-lysyl-[protein] + acetyl-CoA = N(6)-biotinyl-L-lysyl-[protein] + malonyl-CoA. It carries out the reaction N(6)-carboxybiotinyl-L-lysyl-[protein] + propanoyl-CoA = methylmalonyl-CoA + N(6)-biotinyl-L-lysyl-[protein]. The protein operates within lipid metabolism; mycolic acid biosynthesis. Functionally, component of a biotin-dependent acyl-CoA carboxylase complex. This subunit transfers the CO2 from carboxybiotin to the CoA ester substrate. When associated with the alpha3 subunit AccA3, is involved in the carboxylation of acetyl-CoA and propionyl-CoA. The sequence is that of Biotin-dependent acetyl-/propionyl-coenzyme A carboxylase beta5 subunit (accD5) from Mycobacterium leprae (strain TN).